Here is a 71-residue protein sequence, read N- to C-terminus: Small ribosomal subunit protein bS21 (71 aa).

Residues 48-59 show a composition bias toward basic residues; sequence KAAAAVKRHAKK. Residues 48-71 form a disordered region; sequence KAAAAVKRHAKKVQRENRKFQRLY. Residues 60–71 show a composition bias toward basic and acidic residues; that stretch reads VQRENRKFQRLY.

It belongs to the bacterial ribosomal protein bS21 family.

This Saccharophagus degradans (strain 2-40 / ATCC 43961 / DSM 17024) protein is Small ribosomal subunit protein bS21.